The following is a 202-amino-acid chain: ATP-dependent Clp protease proteolytic subunit (202 aa).

The active-site Nucleophile is the Ser106. Residue His131 is part of the active site.

Belongs to the peptidase S14 family. In terms of assembly, fourteen ClpP subunits assemble into 2 heptameric rings which stack back to back to give a disk-like structure with a central cavity, resembling the structure of eukaryotic proteasomes.

It localises to the cytoplasm. The enzyme catalyses Hydrolysis of proteins to small peptides in the presence of ATP and magnesium. alpha-casein is the usual test substrate. In the absence of ATP, only oligopeptides shorter than five residues are hydrolyzed (such as succinyl-Leu-Tyr-|-NHMec, and Leu-Tyr-Leu-|-Tyr-Trp, in which cleavage of the -Tyr-|-Leu- and -Tyr-|-Trp bonds also occurs).. In terms of biological role, cleaves peptides in various proteins in a process that requires ATP hydrolysis. Has a chymotrypsin-like activity. Plays a major role in the degradation of misfolded proteins. The chain is ATP-dependent Clp protease proteolytic subunit from Shewanella oneidensis (strain ATCC 700550 / JCM 31522 / CIP 106686 / LMG 19005 / NCIMB 14063 / MR-1).